We begin with the raw amino-acid sequence, 193 residues long: Probable nicotinate-nucleotide adenylyltransferase (193 aa).

This sequence belongs to the NadD family.

It catalyses the reaction nicotinate beta-D-ribonucleotide + ATP + H(+) = deamido-NAD(+) + diphosphate. It functions in the pathway cofactor biosynthesis; NAD(+) biosynthesis; deamido-NAD(+) from nicotinate D-ribonucleotide: step 1/1. Functionally, catalyzes the reversible adenylation of nicotinate mononucleotide (NaMN) to nicotinic acid adenine dinucleotide (NaAD). In Coprothermobacter proteolyticus (strain ATCC 35245 / DSM 5265 / OCM 4 / BT), this protein is Probable nicotinate-nucleotide adenylyltransferase.